The sequence spans 373 residues: 3 beta-hydroxysteroid dehydrogenase/Delta 5--&gt;4-isomerase (373 aa).

Tyr155 acts as the Proton acceptor in catalysis. An NAD(+)-binding site is contributed by Lys159. Residues 288-308 traverse the membrane as a helical segment; it reads ISLEYWLAFLLEIVSFLLSPI.

This sequence belongs to the 3-beta-HSD family.

The protein localises to the endoplasmic reticulum membrane. It is found in the mitochondrion membrane. The enzyme catalyses a 3beta-hydroxy-Delta(5)-steroid + NAD(+) = a 3-oxo-Delta(5)-steroid + NADH + H(+). It catalyses the reaction a 3-oxo-Delta(5)-steroid = a 3-oxo-Delta(4)-steroid. It functions in the pathway lipid metabolism; steroid biosynthesis. Functionally, 3-beta-HSD is a bifunctional enzyme, that catalyzes the oxidative conversion of Delta(5)-ene-3-beta-hydroxy steroid, and the oxidative conversion of ketosteroids. The 3-beta-HSD enzymatic system plays a crucial role in the biosynthesis of all classes of hormonal steroids. The protein is 3 beta-hydroxysteroid dehydrogenase/Delta 5--&gt;4-isomerase (HSD3B) of Canis lupus familiaris (Dog).